The primary structure comprises 130 residues: L-ectoine synthase (130 aa).

The protein belongs to the ectoine synthase family.

It carries out the reaction (2S)-4-acetamido-2-aminobutanoate = L-ectoine + H2O. Its pathway is amine and polyamine biosynthesis; ectoine biosynthesis; L-ectoine from L-aspartate 4-semialdehyde: step 3/3. Catalyzes the circularization of gamma-N-acetyl-alpha,gamma-diaminobutyric acid (ADABA) to ectoine (1,4,5,6-tetrahydro-2-methyl-4-pyrimidine carboxylic acid), which is an excellent osmoprotectant. The chain is L-ectoine synthase from Mycolicibacterium vanbaalenii (strain DSM 7251 / JCM 13017 / BCRC 16820 / KCTC 9966 / NRRL B-24157 / PYR-1) (Mycobacterium vanbaalenii).